Reading from the N-terminus, the 197-residue chain is Thymidylate kinase (197 aa).

Residue 7–14 (GIDGSGKS) coordinates ATP.

The protein belongs to the thymidylate kinase family.

It catalyses the reaction dTMP + ATP = dTDP + ADP. Functionally, phosphorylation of dTMP to form dTDP in both de novo and salvage pathways of dTTP synthesis. The polypeptide is Thymidylate kinase (tmk) (Thermotoga maritima (strain ATCC 43589 / DSM 3109 / JCM 10099 / NBRC 100826 / MSB8)).